Consider the following 442-residue polypeptide: MENGKMNSLIAQYPLVKDLVALKETTWFNPGTTSLAEGLPYVGLTEQDVQDAHARLSRFAPYLAKAFPETAATGGIIESELVAIPAMQKRLEKEYQQPISGQLLLKKDSHLPISGSIKARGGIYEVLAHAEKLALEAGLLTLDADYSKLLSPEFKQFFSQYSIAVGSTGNLGLSIGIMSARIGFKVTVHMSADARAWKKAKLRSHGVTVVEYEQDYGVAVEEGRKAAQSDPNCFFIDDENSRTLFLGYSVAGQRLKAQFAQQGRIVDADNPLFVYLPCGVGGGPGGVAFGLKLAFGDHVHCFFAEPTHSPCMLLGVHTGLHDQISVQDIGIDNLTAADGLAVGRASGFVGRAMERLLDGFYTLSDQTMYDMLGWLAQEEGIRLEPSALAGMAGPQRVCASVSYQQMHGFNAEQLHNATHLVWATGGGMVPEEEMNQYLAKGR.

Position 118 is an N6-(pyridoxal phosphate)lysine (K118).

The protein belongs to the serine/threonine dehydratase family. DsdA subfamily. Monomer. It depends on pyridoxal 5'-phosphate as a cofactor.

It catalyses the reaction D-serine = pyruvate + NH4(+). The protein is D-serine dehydratase of Shigella dysenteriae serotype 1 (strain Sd197).